A 210-amino-acid chain; its full sequence is MSYAVKEIFLTLQGEGAHAGRASVFCRFAGCNLWSGREADRQDATCKFCDTDFVGTDGTLGGRYASAVELADTIAAQWTASNDNRYVVLTGGEPLLQVDDALIDALHARGFEIGVETNGTIAAPDGLDWICVSPKGGSELVLRRGHELKLVYPQALAAPETFEGLAFERFSLQPMDGPEVAENTARAIDYCLRHPQWRLSVQTHKSLGIR.

Substrate-binding positions include 12-14 (LQG) and Arg-27. The region spanning 18-210 (HAGRASVFCR…VQTHKSLGIR (193 aa)) is the Radical SAM core domain. [4Fe-4S] cluster contacts are provided by Cys-31, Cys-46, and Cys-49. Thr-51 is a Mg(2+) binding site. Residue Thr-90 participates in substrate binding. S-adenosyl-L-methionine contacts are provided by residues Gly-92, 133–135 (SPK), and 173–176 (QPMD).

It belongs to the radical SAM superfamily. 7-carboxy-7-deazaguanine synthase family. Homodimer. Requires [4Fe-4S] cluster as cofactor. S-adenosyl-L-methionine is required as a cofactor. The cofactor is Mg(2+).

The enzyme catalyses 6-carboxy-5,6,7,8-tetrahydropterin + H(+) = 7-carboxy-7-deazaguanine + NH4(+). Its pathway is purine metabolism; 7-cyano-7-deazaguanine biosynthesis. Functionally, catalyzes the complex heterocyclic radical-mediated conversion of 6-carboxy-5,6,7,8-tetrahydropterin (CPH4) to 7-carboxy-7-deazaguanine (CDG), a step common to the biosynthetic pathways of all 7-deazapurine-containing compounds. In Bradyrhizobium diazoefficiens (strain JCM 10833 / BCRC 13528 / IAM 13628 / NBRC 14792 / USDA 110), this protein is 7-carboxy-7-deazaguanine synthase.